Reading from the N-terminus, the 475-residue chain is MEANKKAKPSYGDVISNLPNDLLCRILSYLSTKEAALTSILSKRWSNLLLSIPILDFDDSVLLKPQKGQRKNVFFKAFVDRLLSQRVETSSHVQRVSLKCRQGGVEPDCVIKWILTTVRDLGVLDLSLCIDFGIFHLPFNVFRSKTLVKLRIGTMIRLSQFPSDVVSPTLNSLVLDLVEFRDGDKVEFRQILLAFPSLQSLRVHESNKWKFWNGSASSRTLKSLVYRSDDDSSAPKPCVSFDTPSLVYLDYSDMVADKYENLKFDSLVEARLDLHLTAFQIMRKPNNIGIVSGDVTTLFKGIRNVKILCLSPDALEALYYRGEKIPMFNNLITLSLGSDKPHGSPFIFWKLLPSLLNNSLKLETLIIKGLVHYVAEGWEGLSPMTPMSRLCFSWDTVSDSLSSSAMKVLEISGYKGTWQELNQMKRFLGNLSRLEVVRVYHKAMDDKERINVMFDLFLLPKVSSECDIQVMKETA.

The region spanning 12–58 (GDVISNLPNDLLCRILSYLSTKEAALTSILSKRWSNLLLSIPILDFD) is the F-box domain.

The chain is F-box protein At3g59150 from Arabidopsis thaliana (Mouse-ear cress).